Consider the following 205-residue polypeptide: FMN-dependent NADH:quinone oxidoreductase (205 aa).

Residues Ser-10, Ser-16–Ser-18, and Met-96–Phe-99 each bind FMN.

This sequence belongs to the azoreductase type 1 family. As to quaternary structure, homodimer. FMN serves as cofactor.

It carries out the reaction 2 a quinone + NADH + H(+) = 2 a 1,4-benzosemiquinone + NAD(+). It catalyses the reaction N,N-dimethyl-1,4-phenylenediamine + anthranilate + 2 NAD(+) = 2-(4-dimethylaminophenyl)diazenylbenzoate + 2 NADH + 2 H(+). Quinone reductase that provides resistance to thiol-specific stress caused by electrophilic quinones. Its function is as follows. Also exhibits azoreductase activity. Catalyzes the reductive cleavage of the azo bond in aromatic azo compounds to the corresponding amines. This Nostoc punctiforme (strain ATCC 29133 / PCC 73102) protein is FMN-dependent NADH:quinone oxidoreductase.